The sequence spans 163 residues: ATP synthase subunit b 1 (163 aa).

Residues 6-26 (LAELWVAVAFLLFVGILIYVG) form a helical membrane-spanning segment.

Belongs to the ATPase B chain family. F-type ATPases have 2 components, F(1) - the catalytic core - and F(0) - the membrane proton channel. F(1) has five subunits: alpha(3), beta(3), gamma(1), delta(1), epsilon(1). F(0) has three main subunits: a(1), b(2) and c(10-14). The alpha and beta chains form an alternating ring which encloses part of the gamma chain. F(1) is attached to F(0) by a central stalk formed by the gamma and epsilon chains, while a peripheral stalk is formed by the delta and b chains.

Its subcellular location is the cell inner membrane. Its function is as follows. F(1)F(0) ATP synthase produces ATP from ADP in the presence of a proton or sodium gradient. F-type ATPases consist of two structural domains, F(1) containing the extramembraneous catalytic core and F(0) containing the membrane proton channel, linked together by a central stalk and a peripheral stalk. During catalysis, ATP synthesis in the catalytic domain of F(1) is coupled via a rotary mechanism of the central stalk subunits to proton translocation. Functionally, component of the F(0) channel, it forms part of the peripheral stalk, linking F(1) to F(0). In Xanthobacter autotrophicus (strain ATCC BAA-1158 / Py2), this protein is ATP synthase subunit b 1.